A 453-amino-acid chain; its full sequence is Bifunctional protein GlmU (453 aa).

Residues 1–231 (MERTCLAIIL…EVEMTGCNNR (231 aa)) are pyrophosphorylase. Residues 10 to 13 (LAAG), lysine 24, glutamine 77, 82 to 83 (GT), 105 to 107 (YGD), glycine 143, glutamate 157, asparagine 172, and asparagine 229 contribute to the UDP-N-acetyl-alpha-D-glucosamine site. Aspartate 107 contacts Mg(2+). Asparagine 229 contributes to the Mg(2+) binding site. Residues 232-252 (AELAFIERLWQERRRHELMLS) are linker. Residues 253–453 (GVTMIAPETV…AIKAAKKGSH (201 aa)) form an N-acetyltransferase region. The UDP-N-acetyl-alpha-D-glucosamine site is built by arginine 318 and lysine 336. Histidine 348 acts as the Proton acceptor in catalysis. The UDP-N-acetyl-alpha-D-glucosamine site is built by tyrosine 351 and asparagine 362. Acetyl-CoA-binding positions include alanine 365, 371–372 (NY), serine 390, serine 408, and arginine 425.

It in the N-terminal section; belongs to the N-acetylglucosamine-1-phosphate uridyltransferase family. This sequence in the C-terminal section; belongs to the transferase hexapeptide repeat family. As to quaternary structure, homotrimer. The cofactor is Mg(2+).

Its subcellular location is the cytoplasm. It catalyses the reaction alpha-D-glucosamine 1-phosphate + acetyl-CoA = N-acetyl-alpha-D-glucosamine 1-phosphate + CoA + H(+). It carries out the reaction N-acetyl-alpha-D-glucosamine 1-phosphate + UTP + H(+) = UDP-N-acetyl-alpha-D-glucosamine + diphosphate. The protein operates within nucleotide-sugar biosynthesis; UDP-N-acetyl-alpha-D-glucosamine biosynthesis; N-acetyl-alpha-D-glucosamine 1-phosphate from alpha-D-glucosamine 6-phosphate (route II): step 2/2. It participates in nucleotide-sugar biosynthesis; UDP-N-acetyl-alpha-D-glucosamine biosynthesis; UDP-N-acetyl-alpha-D-glucosamine from N-acetyl-alpha-D-glucosamine 1-phosphate: step 1/1. It functions in the pathway bacterial outer membrane biogenesis; LPS lipid A biosynthesis. In terms of biological role, catalyzes the last two sequential reactions in the de novo biosynthetic pathway for UDP-N-acetylglucosamine (UDP-GlcNAc). The C-terminal domain catalyzes the transfer of acetyl group from acetyl coenzyme A to glucosamine-1-phosphate (GlcN-1-P) to produce N-acetylglucosamine-1-phosphate (GlcNAc-1-P), which is converted into UDP-GlcNAc by the transfer of uridine 5-monophosphate (from uridine 5-triphosphate), a reaction catalyzed by the N-terminal domain. The protein is Bifunctional protein GlmU of Rhizobium rhizogenes (strain K84 / ATCC BAA-868) (Agrobacterium radiobacter).